Consider the following 534-residue polypeptide: Multicopper oxidase LPR1 homolog 3 (534 aa).

Residues His-84 and His-86 each coordinate Cu cation. N-linked (GlcNAc...) asparagine glycosylation is present at Asn-109. 2 residues coordinate Cu cation: His-133 and His-135. The Plastocyanin-like domain maps to 219–291 (PFQAVQRRRY…VDFSLVVNPN (73 aa)). N-linked (GlcNAc...) asparagine glycosylation is found at Asn-234, Asn-291, Asn-312, Asn-323, Asn-341, and Asn-372. The Cu cation site is built by His-419, His-422, and His-424. Asn-450 carries an N-linked (GlcNAc...) asparagine glycan. His-515, Cys-516, His-517, His-521, and Met-526 together coordinate Cu cation.

The protein belongs to the multicopper oxidase family. Cu cation is required as a cofactor. Expressed in roots and basal stems.

It is found in the endoplasmic reticulum membrane. Functionally, multicopper oxidase that may play a role in the maintenance of inorganic phosphate homeostasis. The sequence is that of Multicopper oxidase LPR1 homolog 3 from Oryza sativa subsp. japonica (Rice).